The primary structure comprises 618 residues: Very-long-chain aldehyde decarbonylase GL1-3 (618 aa).

The next 7 helical transmembrane spans lie at 9–29 (LSSWPWAFLGSYKYLLYGPVV), 46–66 (TSWCLHLILLLALRSLTMLFF), 91–111 (MVIMQTLIAAVLVTSRVFPAT), 121–141 (GWAIAVVLHVAVSEPAFYWAH), 174–194 (LESLILTLVAWAPLAGAFMAG), 289–309 (DFVFLVHVVDVVSSMHVPFAF), and 315–335 (LPFATHLVLLPLWPIAFGFML). Residues 127-267 (VLHVAVSEPA…MPLFDALGGT (141 aa)) form the Fatty acid hydroxylase domain.

Belongs to the sterol desaturase family. In terms of assembly, homodimer. Expressed in germinating seeds and stamens.

It localises to the endoplasmic reticulum membrane. It catalyses the reaction a long-chain fatty aldehyde + 2 NADPH + O2 + H(+) = a long-chain alkane + formate + 2 NADP(+) + H2O. Aldehyde decarbonylase involved in the conversion of aldehydes to alkanes. Core component of a very-long-chain alkane synthesis complex. This Oryza sativa subsp. japonica (Rice) protein is Very-long-chain aldehyde decarbonylase GL1-3.